A 126-amino-acid polypeptide reads, in one-letter code: Probable prefoldin subunit 4 (126 aa).

Belongs to the prefoldin subunit beta family. In terms of assembly, heterohexamer of two PFD-alpha type and four PFD-beta type subunits.

Its function is as follows. Binds specifically to cytosolic chaperonin (c-CPN) and transfers target proteins to it. Binds to nascent polypeptide chain and promotes folding in an environment in which there are many competing pathways for nonnative proteins. Appears to play a non-essential role. The sequence is that of Probable prefoldin subunit 4 from Caenorhabditis briggsae.